Reading from the N-terminus, the 119-residue chain is Large ribosomal subunit protein bL20 (119 aa).

Belongs to the bacterial ribosomal protein bL20 family.

Its function is as follows. Binds directly to 23S ribosomal RNA and is necessary for the in vitro assembly process of the 50S ribosomal subunit. It is not involved in the protein synthesizing functions of that subunit. The chain is Large ribosomal subunit protein bL20 from Coxiella burnetii (strain CbuK_Q154) (Coxiella burnetii (strain Q154)).